We begin with the raw amino-acid sequence, 240 residues long: UDP-2,3-diacylglucosamine hydrolase (240 aa).

Mn(2+)-binding residues include D9, H11, D43, N81, and H116. Residue 81–82 (NR) coordinates substrate. Substrate-binding residues include D124, S162, K166, K169, and H197. The Mn(2+) site is built by H197 and H199.

It belongs to the LpxH family. Mn(2+) is required as a cofactor.

The protein resides in the cell inner membrane. It catalyses the reaction UDP-2-N,3-O-bis[(3R)-3-hydroxytetradecanoyl]-alpha-D-glucosamine + H2O = 2-N,3-O-bis[(3R)-3-hydroxytetradecanoyl]-alpha-D-glucosaminyl 1-phosphate + UMP + 2 H(+). It functions in the pathway glycolipid biosynthesis; lipid IV(A) biosynthesis; lipid IV(A) from (3R)-3-hydroxytetradecanoyl-[acyl-carrier-protein] and UDP-N-acetyl-alpha-D-glucosamine: step 4/6. Hydrolyzes the pyrophosphate bond of UDP-2,3-diacylglucosamine to yield 2,3-diacylglucosamine 1-phosphate (lipid X) and UMP by catalyzing the attack of water at the alpha-P atom. Involved in the biosynthesis of lipid A, a phosphorylated glycolipid that anchors the lipopolysaccharide to the outer membrane of the cell. The chain is UDP-2,3-diacylglucosamine hydrolase from Neisseria gonorrhoeae (strain ATCC 700825 / FA 1090).